The primary structure comprises 263 residues: N-acetylgalactosamine permease IID component (263 aa).

Positions 3–263 (SEISKKDITR…SIVCSAFGIL (261 aa)) constitute a PTS EIID domain. 6 helical membrane passes run 61-81 (LEFI…LISM), 98-118 (LFGP…LPIM), 131-151 (LLGP…RVGW), 178-198 (TILG…INVV), 215-235 (FFDK…MYYF), and 243-263 (PVLL…FGIL).

It is found in the cell inner membrane. The phosphoenolpyruvate-dependent sugar phosphotransferase system (PTS), a major carbohydrate active -transport system, catalyzes the phosphorylation of incoming sugar substrates concomitant with their translocation across the cell membrane. This system is involved in N-acetylgalactosamine transport. The chain is N-acetylgalactosamine permease IID component (agaD) from Escherichia coli (strain K12).